The primary structure comprises 417 residues: Putative nickel insertion protein (417 aa).

Residues 69–99 are disordered; the sequence is HEHHHDHGHHHHGHGHHHDHTHDHHHHHEHR. Over residues 74 to 99 the composition is skewed to basic residues; the sequence is DHGHHHHGHGHHHDHTHDHHHHHEHR.

It belongs to the LarC family.

The protein is Putative nickel insertion protein of Maridesulfovibrio salexigens (strain ATCC 14822 / DSM 2638 / NCIMB 8403 / VKM B-1763) (Desulfovibrio salexigens).